Consider the following 134-residue polypeptide: MTIAVQTRDLSPLARARQARGTRAMLSGAAAEARVERAYRDRGCDVLATRWRGSGGEVDLIVRRGDLLVFVEVKSSASYTRAIESLSLAQLTRIQNTALEFLDRSPDLAGLEMRFDLAVVEGSGRFRVLANITM.

The protein belongs to the UPF0102 family.

The protein is UPF0102 protein Dshi_2830 of Dinoroseobacter shibae (strain DSM 16493 / NCIMB 14021 / DFL 12).